A 540-amino-acid chain; its full sequence is Suppressor of tumorigenicity 7 protein-like (540 aa).

4 consecutive transmembrane segments (helical) span residues Trp24–Leu44, Phe68–Trp88, Leu475–Leu495, and Leu502–Ala522.

Belongs to the ST7 family.

The protein resides in the membrane. This chain is Suppressor of tumorigenicity 7 protein-like (st7l), found in Danio rerio (Zebrafish).